We begin with the raw amino-acid sequence, 385 residues long: Proteinase-activated receptor 4 (385 aa).

An N-terminal signal peptide occupies residues 1 to 17 (MWGRLLLWPLVLGFSLS). A propeptide spans 18–47 (GGTQTPSVYDESGSTGGGDDSTPSILPAPR) (removed for receptor activation). The interval 21–42 (QTPSVYDESGSTGGGDDSTPSI) is disordered. The Extracellular portion of the chain corresponds to 48–82 (GYPGQVCANDSDTLELPDSSRALLLGWVPTRLVPA). The N-linked (GlcNAc...) asparagine glycan is linked to Asn-56. A helical membrane pass occupies residues 83–103 (LYGLVLVVGLPANGLALWVLA). At 104-108 (TQAPR) the chain is on the cytoplasmic side. The helical transmembrane segment at 109 to 129 (LPSTMLLMNLAAADLLLALAL) threads the bilayer. Topologically, residues 130 to 151 (PPRIAYHLRGQRWPFGEAACRL) are extracellular. Cys-149 and Cys-228 are oxidised to a cystine. Residues 152–172 (ATAALYGHMYGSVLLLAAVSL) traverse the membrane as a helical segment. At 173–192 (DRYLALVHPLRARALRGRRL) the chain is on the cytoplasmic side. Residues 193 to 213 (ALGLCMAAWLMAAALALPLTL) traverse the membrane as a helical segment. At 214–247 (QRQTFRLARSDRVLCHDALPLDAQASHWQPAFTC) the chain is on the extracellular side. A helical membrane pass occupies residues 248–268 (LALLGCFLPLLAMLLCYGATL). Over 269-283 (HTLAASGRRYGHALR) the chain is Cytoplasmic. A helical transmembrane segment spans residues 284–304 (LTAVVLASAVAFFVPSNLLLL). The Extracellular portion of the chain corresponds to 305 to 319 (LHYSDPSPSAWGNLY). The helical transmembrane segment at 320–343 (GAYVPSLALSTLNSCVDPFIYYYV) threads the bilayer. The Cytoplasmic segment spans residues 344–385 (SAEFRDKVRAGLFQRSPGDTVASKASAEGGSRGMGTHSSLLQ). The segment at 362–385 (DTVASKASAEGGSRGMGTHSSLLQ) is disordered.

The protein belongs to the G-protein coupled receptor 1 family. A proteolytic cleavage generates a new N-terminus that functions as a tethered ligand. In terms of tissue distribution, widely expressed, with highest levels in lung, pancreas, thyroid, testis and small intestine. Not expressed in brain, kidney, spinal cord and peripheral blood leukocytes. Also detected in platelets.

Its subcellular location is the cell membrane. Activated upon interaction by mucunain, a cowhage (Mucuna pruriens) plant cysteine proteinase. Functionally, receptor for activated thrombin or trypsin coupled to G proteins that stimulate phosphoinositide hydrolysis. May play a role in platelets activation. This is Proteinase-activated receptor 4 (F2RL3) from Homo sapiens (Human).